We begin with the raw amino-acid sequence, 389 residues long: Stilbene synthase 1 (389 aa).

55–58 (KFQR) is a substrate binding site. Cysteine 164 is an active-site residue. Residues leucine 267 and 305–307 (GGR) each bind substrate.

The protein belongs to the thiolase-like superfamily. Chalcone/stilbene synthases family. Homodimer.

The protein localises to the cytoplasm. It catalyses the reaction 4-coumaroyl-CoA + 3 malonyl-CoA + 3 H(+) = trans-resveratrol + 4 CO2 + 4 CoA. The protein operates within phytoalexin biosynthesis; 3,4',5-trihydroxystilbene biosynthesis; 3,4',5-trihydroxystilbene from trans-4-coumarate: step 2/2. The protein is Stilbene synthase 1 of Arachis hypogaea (Peanut).